Reading from the N-terminus, the 470-residue chain is Neuraminidase (470 aa).

Residues 1–14 (MNPNQKIIAIGSAS) are Intravirion-facing. An involved in apical transport and lipid raft association region spans residues 11–32 (GSASLGILILNVILHVVSIIVT). Residues 15 to 35 (LGILILNVILHVVSIIVTVLV) traverse the membrane as a helical segment. The segment at 32–86 (TVLVLNNNGTGLNCNRTIIREYNETVRVERITQWYNTSTIEYIERPSNEYYMNNT) is hypervariable stalk region. Residues 36 to 470 (LNNNGTGLNC…AILPFDIDKM (435 aa)) are Virion surface-facing. 5 N-linked (GlcNAc...) asparagine; by host glycosylation sites follow: asparagine 39, asparagine 46, asparagine 54, asparagine 67, and asparagine 84. The tract at residues 89-470 (LCEAQGFAPF…AILPFDIDKM (382 aa)) is head of neuraminidase. 8 disulfides stabilise this stretch: cysteine 90–cysteine 417, cysteine 122–cysteine 127, cysteine 182–cysteine 229, cysteine 231–cysteine 236, cysteine 277–cysteine 290, cysteine 279–cysteine 288, cysteine 316–cysteine 335, and cysteine 421–cysteine 446. Arginine 116 is a substrate binding site. An N-linked (GlcNAc...) asparagine; by host glycan is attached at asparagine 144. Residue aspartate 149 is the Proton donor/acceptor of the active site. Arginine 150 contributes to the substrate binding site. 275 to 276 (EE) serves as a coordination point for substrate. Arginine 291 lines the substrate pocket. A Ca(2+)-binding site is contributed by aspartate 292. N-linked (GlcNAc...) asparagine; by host glycosylation is present at asparagine 293. Residues glycine 296 and aspartate 322 each contribute to the Ca(2+) site. Position 368 (arginine 368) interacts with substrate. Asparagine 398 carries N-linked (GlcNAc...) asparagine; by host glycosylation. Residue tyrosine 402 is the Nucleophile of the active site.

It belongs to the glycosyl hydrolase 34 family. In terms of assembly, homotetramer. It depends on Ca(2+) as a cofactor. Post-translationally, N-glycosylated.

The protein resides in the virion membrane. It is found in the host apical cell membrane. The catalysed reaction is Hydrolysis of alpha-(2-&gt;3)-, alpha-(2-&gt;6)-, alpha-(2-&gt;8)- glycosidic linkages of terminal sialic acid residues in oligosaccharides, glycoproteins, glycolipids, colominic acid and synthetic substrates.. Inhibited by the neuraminidase inhibitors zanamivir (Relenza) and oseltamivir (Tamiflu). These drugs interfere with the release of progeny virus from infected cells and are effective against all influenza strains. Resistance to neuraminidase inhibitors is quite rare. Catalyzes the removal of terminal sialic acid residues from viral and cellular glycoconjugates. Cleaves off the terminal sialic acids on the glycosylated HA during virus budding to facilitate virus release. Additionally helps virus spread through the circulation by further removing sialic acids from the cell surface. These cleavages prevent self-aggregation and ensure the efficient spread of the progeny virus from cell to cell. Otherwise, infection would be limited to one round of replication. Described as a receptor-destroying enzyme because it cleaves a terminal sialic acid from the cellular receptors. May facilitate viral invasion of the upper airways by cleaving the sialic acid moieties on the mucin of the airway epithelial cells. Likely to plays a role in the budding process through its association with lipid rafts during intracellular transport. May additionally display a raft-association independent effect on budding. Plays a role in the determination of host range restriction on replication and virulence. Sialidase activity in late endosome/lysosome traffic seems to enhance virus replication. This chain is Neuraminidase, found in Aves (Horse).